The chain runs to 210 residues: Claudin-4 (210 aa).

Residues methionine 1–glutamine 7 lie on the Cytoplasmic side of the membrane. The interaction with EPHA2 stretch occupies residues methionine 1 to lysine 103. The chain crosses the membrane as a helical span at residues valine 8 to proline 28. At methionine 29–arginine 81 the chain is on the extracellular side. Residues cysteine 54 and cysteine 64 are joined by a disulfide bond. Residues alanine 82–glycine 102 form a helical membrane-spanning segment. At lysine 103–threonine 117 the chain is on the cytoplasmic side. A helical transmembrane segment spans residues methionine 118–tryptophan 138. Residues threonine 139 to methionine 160 lie on the Extracellular side of the membrane. The chain crosses the membrane as a helical span at residues glycine 161 to leucine 181. Over cysteine 182–valine 210 the chain is Cytoplasmic. At tyrosine 209 the chain carries Phosphotyrosine. Positions tyrosine 209–valine 210 are interactions with TJP1, TJP2 and TJP3.

Belongs to the claudin family. Can form heteropolymeric strands with other claudins. Interacts with CLDN8. Interacts with CLDN1. Directly interacts with TJP1/ZO-1. Interacts with TJP2/ZO-2 and TJP3/ZO-3. Interacts with EPHA2; phosphorylates CLDN4 and may regulate tight junctions. Phosphorylated. Phosphorylation by EPHA2 is stimulated by EFNA1 and alters interaction with TJP1.

The protein localises to the cell junction. It is found in the tight junction. The protein resides in the cell membrane. The catalysed reaction is chloride(in) = chloride(out). It carries out the reaction bromide(in) = bromide(out). It catalyses the reaction iodide(out) = iodide(in). The enzyme catalyses fluoride(in) = fluoride(out). In terms of biological role, can associate with other claudins to regulate tight junction structural and functional strand dynamics. May coassemble with CLDN8 into tight junction strands containing anion-selective channels that convey paracellular chloride permeability in renal collecting ducts. May integrate into CLDN3 strands to modulate localized tight junction barrier properties. May disrupt strand assembly of channel-forming CLDN2 and CLDN15 and inhibit cation conductance. Cannot form tight junction strands on its own. The sequence is that of Claudin-4 (CLDN4) from Canis lupus familiaris (Dog).